Reading from the N-terminus, the 269-residue chain is Shikimate dehydrogenase (NADP(+)) (269 aa).

Residues 14–16 (SKS) and T61 each bind shikimate. Catalysis depends on K65, which acts as the Proton acceptor. E77 serves as a coordination point for NADP(+). 2 residues coordinate shikimate: N86 and D102. NADP(+)-binding positions include 126–130 (GAGGA), 150–155 (NRTYEK), and M213. A shikimate-binding site is contributed by Y215. G237 provides a ligand contact to NADP(+).

It belongs to the shikimate dehydrogenase family. As to quaternary structure, homodimer.

The catalysed reaction is shikimate + NADP(+) = 3-dehydroshikimate + NADPH + H(+). The protein operates within metabolic intermediate biosynthesis; chorismate biosynthesis; chorismate from D-erythrose 4-phosphate and phosphoenolpyruvate: step 4/7. Its function is as follows. Involved in the biosynthesis of the chorismate, which leads to the biosynthesis of aromatic amino acids. Catalyzes the reversible NADPH linked reduction of 3-dehydroshikimate (DHSA) to yield shikimate (SA). The sequence is that of Shikimate dehydrogenase (NADP(+)) from Aliivibrio fischeri (strain ATCC 700601 / ES114) (Vibrio fischeri).